Here is a 616-residue protein sequence, read N- to C-terminus: Chaperone protein HscA (616 aa).

The protein belongs to the heat shock protein 70 family.

Its function is as follows. Chaperone involved in the maturation of iron-sulfur cluster-containing proteins. Has a low intrinsic ATPase activity which is markedly stimulated by HscB. Involved in the maturation of IscU. In Escherichia coli O17:K52:H18 (strain UMN026 / ExPEC), this protein is Chaperone protein HscA.